Reading from the N-terminus, the 641-residue chain is Tetracycline resistance protein TetS (641 aa).

Residues 1-242 (MKIINIGILA…VITSKLFSPT (242 aa)) form the tr-type G domain. Residues 10–17 (AHVDAGKT), 74–78 (DTPGH), and 128–131 (NKID) contribute to the GTP site.

Belongs to the TRAFAC class translation factor GTPase superfamily. Classic translation factor GTPase family. TetM/TetO subfamily.

In terms of biological role, abolishes the inhibitory effect of tetracyclin on protein synthesis by a non-covalent modification of the ribosomes. The chain is Tetracycline resistance protein TetS (tetS) from Listeria monocytogenes.